The sequence spans 429 residues: GTPase Obg (429 aa).

An Obg domain is found at 1-158 (MFADSAKIFI…LNVTLELKVI (158 aa)). One can recognise an OBG-type G domain in the interval 159 to 333 (ADVGLVGFPN…LLYYVSDLLK (175 aa)). GTP-binding positions include 165–172 (GFPNVGKS), 190–194 (FTTLN), 212–215 (DIPG), 282–285 (NKTD), and 314–316 (SAV). Mg(2+)-binding residues include Ser172 and Thr192. The OCT domain occupies 350–429 (ENLVMSEPYT…MYGLEFDYYK (80 aa)).

The protein belongs to the TRAFAC class OBG-HflX-like GTPase superfamily. OBG GTPase family. In terms of assembly, monomer. Mg(2+) serves as cofactor.

Its subcellular location is the cytoplasm. An essential GTPase which binds GTP, GDP and possibly (p)ppGpp with moderate affinity, with high nucleotide exchange rates and a fairly low GTP hydrolysis rate. Plays a role in control of the cell cycle, stress response, ribosome biogenesis and in those bacteria that undergo differentiation, in morphogenesis control. This is GTPase Obg from Lachnoclostridium phytofermentans (strain ATCC 700394 / DSM 18823 / ISDg) (Clostridium phytofermentans).